Here is a 149-residue protein sequence, read N- to C-terminus: NADH-quinone oxidoreductase subunit A (149 aa).

The next 3 helical transmembrane spans lie at 16–36 (FGIF…GAWF), 68–88 (FYLV…LFAW), and 98–118 (LGFI…VYLV).

This sequence belongs to the complex I subunit 3 family. NDH-1 is composed of 13 different subunits. Subunits NuoA, H, J, K, L, M, N constitute the membrane sector of the complex.

The protein resides in the cell inner membrane. It catalyses the reaction a quinone + NADH + 5 H(+)(in) = a quinol + NAD(+) + 4 H(+)(out). In terms of biological role, NDH-1 shuttles electrons from NADH, via FMN and iron-sulfur (Fe-S) centers, to quinones in the respiratory chain. The immediate electron acceptor for the enzyme in this species is believed to be ubiquinone. Couples the redox reaction to proton translocation (for every two electrons transferred, four hydrogen ions are translocated across the cytoplasmic membrane), and thus conserves the redox energy in a proton gradient. This chain is NADH-quinone oxidoreductase subunit A, found in Cronobacter sakazakii (strain ATCC BAA-894) (Enterobacter sakazakii).